Reading from the N-terminus, the 803-residue chain is Lon protease (803 aa).

Residues 9 to 202 (MPVLPLRDVV…YLLGMMESEA (194 aa)) enclose the Lon N-terminal domain. ATP is bound at residue 356-363 (GPPGVGKT). The Lon proteolytic domain occupies 592-773 (QNRIGEVTGL…DEVLGFALEN (182 aa)). Residues serine 679 and lysine 722 contribute to the active site.

It belongs to the peptidase S16 family. In terms of assembly, homohexamer. Organized in a ring with a central cavity.

Its subcellular location is the cytoplasm. It catalyses the reaction Hydrolysis of proteins in presence of ATP.. ATP-dependent serine protease that mediates the selective degradation of mutant and abnormal proteins as well as certain short-lived regulatory proteins. Required for cellular homeostasis and for survival from DNA damage and developmental changes induced by stress. Degrades polypeptides processively to yield small peptide fragments that are 5 to 10 amino acids long. Binds to DNA in a double-stranded, site-specific manner. The sequence is that of Lon protease from Haemophilus influenzae (strain ATCC 51907 / DSM 11121 / KW20 / Rd).